A 296-amino-acid chain; its full sequence is Nucleotide-binding protein spr1424 (296 aa).

13–20 is an ATP binding site; sequence GMGGAGKT. 63–66 contacts GTP; the sequence is DMRS.

Belongs to the RapZ-like family.

Displays ATPase and GTPase activities. The sequence is that of Nucleotide-binding protein spr1424 from Streptococcus pneumoniae (strain ATCC BAA-255 / R6).